The sequence spans 65 residues: DNA-directed RNA polymerase subunit Rpo10 (65 aa).

Zn(2+) is bound by residues C7, C10, C44, and C45.

Belongs to the archaeal Rpo10/eukaryotic RPB10 RNA polymerase subunit family. Part of the RNA polymerase complex. Zn(2+) serves as cofactor.

Its subcellular location is the cytoplasm. It carries out the reaction RNA(n) + a ribonucleoside 5'-triphosphate = RNA(n+1) + diphosphate. DNA-dependent RNA polymerase (RNAP) catalyzes the transcription of DNA into RNA using the four ribonucleoside triphosphates as substrates. This Nanoarchaeum equitans (strain Kin4-M) protein is DNA-directed RNA polymerase subunit Rpo10.